Reading from the N-terminus, the 859-residue chain is DNA mismatch repair protein MutS (859 aa).

617 to 624 contacts ATP; sequence GPNMGGKS. Positions 799-821 are disordered; sequence ETTSLPHEQPRAKPGKPAVPQQS.

The protein belongs to the DNA mismatch repair MutS family.

This protein is involved in the repair of mismatches in DNA. It is possible that it carries out the mismatch recognition step. This protein has a weak ATPase activity. This chain is DNA mismatch repair protein MutS, found in Pseudomonas syringae pv. syringae (strain B728a).